A 199-amino-acid chain; its full sequence is Recombination protein RecR (199 aa).

The C4-type zinc finger occupies 58–73; sequence CKICFNITDKEVCDIC. The region spanning 81–176 is the Toprim domain; that stretch reads STICVVSHPM…KVTRIAHGIP (96 aa).

Belongs to the RecR family.

In terms of biological role, may play a role in DNA repair. It seems to be involved in an RecBC-independent recombinational process of DNA repair. It may act with RecF and RecO. The sequence is that of Recombination protein RecR from Caldanaerobacter subterraneus subsp. tengcongensis (strain DSM 15242 / JCM 11007 / NBRC 100824 / MB4) (Thermoanaerobacter tengcongensis).